The primary structure comprises 505 residues: Lysine--tRNA ligase (505 aa).

Mg(2+) is bound by residues glutamate 415 and glutamate 422.

It belongs to the class-II aminoacyl-tRNA synthetase family. In terms of assembly, homodimer. Mg(2+) is required as a cofactor.

Its subcellular location is the cytoplasm. It carries out the reaction tRNA(Lys) + L-lysine + ATP = L-lysyl-tRNA(Lys) + AMP + diphosphate. This chain is Lysine--tRNA ligase, found in Cronobacter sakazakii (strain ATCC BAA-894) (Enterobacter sakazakii).